The sequence spans 137 residues: Large ribosomal subunit protein eL28 (137 aa).

The residue at position 2 (Ser-2) is an N-acetylserine. Residues Lys-58 and Lys-65 each participate in a glycyl lysine isopeptide (Lys-Gly) (interchain with G-Cter in SUMO2) cross-link. Ser-115 is subject to Phosphoserine.

It belongs to the eukaryotic ribosomal protein eL28 family. Component of the large ribosomal subunit.

It localises to the cytoplasm. In terms of biological role, component of the large ribosomal subunit. The ribosome is a large ribonucleoprotein complex responsible for the synthesis of proteins in the cell. This Bos taurus (Bovine) protein is Large ribosomal subunit protein eL28 (RPL28).